Consider the following 566-residue polypeptide: KsdD-like steroid dehydrogenase Rv0785 (566 aa).

An FAD-binding site is contributed by 23-54 (DAIVVGAGLAGLVAACELADRGLRVLILDQEN).

This sequence belongs to the FAD-dependent oxidoreductase 2 family. It depends on FAD as a cofactor.

It functions in the pathway lipid metabolism; steroid biosynthesis. Functionally, able to catalyze the elimination of the C-1 and C-2 hydrogen atoms of the A-ring from the polycyclic ring structure of 3-ketosteroids. The polypeptide is KsdD-like steroid dehydrogenase Rv0785 (Mycobacterium tuberculosis (strain ATCC 25618 / H37Rv)).